The sequence spans 438 residues: EF-hand calcium-binding domain-containing protein 3 (438 aa).

EF-hand domains are found at residues 47-82 and 83-118; these read SQMA…LGMN and LTKH…KNLF. 5 residues coordinate Ca(2+): Asp-96, Asp-98, Asp-100, Lys-102, and Asp-107. Phosphotyrosine is present on Tyr-279. Low complexity predominate over residues 405-415; the sequence is SSHNSRSSSSS. The interval 405–438 is disordered; that stretch reads SSHNSRSSSSSDTSECYTDSGRKRKRKGLKGFQQ. Positions 426 to 438 are enriched in basic residues; that stretch reads RKRKRKGLKGFQQ.

The protein is EF-hand calcium-binding domain-containing protein 3 (EFCAB3) of Homo sapiens (Human).